A 189-amino-acid polypeptide reads, in one-letter code: Putative zinc finger protein ORF189 (189 aa).

The C2H2-type zinc-finger motif lies at 114–137 (YVCPYCVSRFPTVRALKIHLKRRH).

The protein is Putative zinc finger protein ORF189 of Acidianus two-tailed virus (ATV).